The sequence spans 509 residues: Aspartyl/glutamyl-tRNA(Asn/Gln) amidotransferase subunit B (509 aa).

The protein belongs to the GatB/GatE family. GatB subfamily. As to quaternary structure, heterotrimer of A, B and C subunits.

It carries out the reaction L-glutamyl-tRNA(Gln) + L-glutamine + ATP + H2O = L-glutaminyl-tRNA(Gln) + L-glutamate + ADP + phosphate + H(+). It catalyses the reaction L-aspartyl-tRNA(Asn) + L-glutamine + ATP + H2O = L-asparaginyl-tRNA(Asn) + L-glutamate + ADP + phosphate + 2 H(+). In terms of biological role, allows the formation of correctly charged Asn-tRNA(Asn) or Gln-tRNA(Gln) through the transamidation of misacylated Asp-tRNA(Asn) or Glu-tRNA(Gln) in organisms which lack either or both of asparaginyl-tRNA or glutaminyl-tRNA synthetases. The reaction takes place in the presence of glutamine and ATP through an activated phospho-Asp-tRNA(Asn) or phospho-Glu-tRNA(Gln). This chain is Aspartyl/glutamyl-tRNA(Asn/Gln) amidotransferase subunit B, found in Psychrobacter arcticus (strain DSM 17307 / VKM B-2377 / 273-4).